The primary structure comprises 236 residues: MIRAELDKDPRDVAAMFDSIADRYDLLNRVLSLGRERYWRQATVAAVDAYSGELVLDLAAGTGTSSESFTRRGARVIACDFSFGMLRVGAERRGGASRKGVTVVAGDALHLPFADQTFDAVTISFGLRNVHDVDRALAELLRVTKVGGRLVICEFSHLPVQPLDRMLGWGMKIGLPWVARQFSDNPDAYAYLSESIAAWPDQAGLARKISAAGWSRVAWRNLTFGVVALHRAYRER.

Residues threonine 62, aspartate 80, aspartate 107–alanine 108, and serine 124 contribute to the S-adenosyl-L-methionine site.

The protein belongs to the class I-like SAM-binding methyltransferase superfamily. MenG/UbiE family.

It catalyses the reaction a 2-demethylmenaquinol + S-adenosyl-L-methionine = a menaquinol + S-adenosyl-L-homocysteine + H(+). The protein operates within quinol/quinone metabolism; menaquinone biosynthesis; menaquinol from 1,4-dihydroxy-2-naphthoate: step 2/2. Its function is as follows. Methyltransferase required for the conversion of demethylmenaquinol (DMKH2) to menaquinol (MKH2). This chain is Demethylmenaquinone methyltransferase, found in Thermobifida fusca (strain YX).